The primary structure comprises 268 residues: LOB domain-containing protein 22 (268 aa).

The interval 1–31 (MPSGKPSSVFPLHPKPTPLKPSSSTSSSNNN) is disordered. Positions 22-31 (SSSTSSSNNN) are enriched in low complexity. Residues 35 to 136 (QACAACKYQR…NELEIVLQQL (102 aa)) form the LOB domain.

This sequence belongs to the LOB domain-containing protein family.

The protein is LOB domain-containing protein 22 (LBD22) of Arabidopsis thaliana (Mouse-ear cress).